A 101-amino-acid polypeptide reads, in one-letter code: Large ribosomal subunit protein bL21 (101 aa).

It belongs to the bacterial ribosomal protein bL21 family. Part of the 50S ribosomal subunit. Contacts protein L20.

This protein binds to 23S rRNA in the presence of protein L20. The protein is Large ribosomal subunit protein bL21 of Corynebacterium efficiens (strain DSM 44549 / YS-314 / AJ 12310 / JCM 11189 / NBRC 100395).